The primary structure comprises 107 residues: uncharacterized protein (107 aa).

The helical transmembrane segment at 25 to 42 (LSLCSVLLSWLICAMCLW) threads the bilayer.

The protein resides in the host membrane. This is an uncharacterized protein from Galliformes (FAdV-1).